We begin with the raw amino-acid sequence, 262 residues long: 1-(5-phosphoribosyl)-5-[(5-phosphoribosylamino)methylideneamino] imidazole-4-carboxamide isomerase (262 aa).

The active-site Proton acceptor is D8. D130 (proton donor) is an active-site residue.

Belongs to the HisA/HisF family.

It localises to the cytoplasm. It catalyses the reaction 1-(5-phospho-beta-D-ribosyl)-5-[(5-phospho-beta-D-ribosylamino)methylideneamino]imidazole-4-carboxamide = 5-[(5-phospho-1-deoxy-D-ribulos-1-ylimino)methylamino]-1-(5-phospho-beta-D-ribosyl)imidazole-4-carboxamide. It functions in the pathway amino-acid biosynthesis; L-histidine biosynthesis; L-histidine from 5-phospho-alpha-D-ribose 1-diphosphate: step 4/9. The polypeptide is 1-(5-phosphoribosyl)-5-[(5-phosphoribosylamino)methylideneamino] imidazole-4-carboxamide isomerase (Chloroherpeton thalassium (strain ATCC 35110 / GB-78)).